The primary structure comprises 212 residues: Large ribosomal subunit protein uL3 (212 aa).

The disordered stretch occupies residues 129–156; the sequence is RRGPMGHGSKNHRAPGSTGAGTTPGRIY. Residues 142 to 153 show a composition bias toward low complexity; it reads APGSTGAGTTPG.

Belongs to the universal ribosomal protein uL3 family. As to quaternary structure, part of the 50S ribosomal subunit. Forms a cluster with proteins L14 and L19.

One of the primary rRNA binding proteins, it binds directly near the 3'-end of the 23S rRNA, where it nucleates assembly of the 50S subunit. The protein is Large ribosomal subunit protein uL3 of Acaryochloris marina (strain MBIC 11017).